Here is a 197-residue protein sequence, read N- to C-terminus: Holliday junction branch migration complex subunit RuvA (197 aa).

The domain I stretch occupies residues 1-63 (MYDYIKGNLT…EDAHLLYGFH (63 aa)). Residues 64–142 (TEDEKAVFLN…DINEVSTDKS (79 aa)) are domain II. Positions 143–147 (KVSTI) are flexible linker. Residues 148-197 (NNNQELEEAVEALLALGYKTNELKKIEKFFEGTTDTAENYIKSALKMLMK) form a domain III region.

The protein belongs to the RuvA family. In terms of assembly, homotetramer. Forms an RuvA(8)-RuvB(12)-Holliday junction (HJ) complex. HJ DNA is sandwiched between 2 RuvA tetramers; dsDNA enters through RuvA and exits via RuvB. An RuvB hexamer assembles on each DNA strand where it exits the tetramer. Each RuvB hexamer is contacted by two RuvA subunits (via domain III) on 2 adjacent RuvB subunits; this complex drives branch migration. In the full resolvosome a probable DNA-RuvA(4)-RuvB(12)-RuvC(2) complex forms which resolves the HJ.

The protein localises to the cytoplasm. In terms of biological role, the RuvA-RuvB-RuvC complex processes Holliday junction (HJ) DNA during genetic recombination and DNA repair, while the RuvA-RuvB complex plays an important role in the rescue of blocked DNA replication forks via replication fork reversal (RFR). RuvA specifically binds to HJ cruciform DNA, conferring on it an open structure. The RuvB hexamer acts as an ATP-dependent pump, pulling dsDNA into and through the RuvAB complex. HJ branch migration allows RuvC to scan DNA until it finds its consensus sequence, where it cleaves and resolves the cruciform DNA. In Streptococcus mutans serotype c (strain ATCC 700610 / UA159), this protein is Holliday junction branch migration complex subunit RuvA.